Consider the following 1030-residue polypeptide: uncharacterized protein (1030 aa).

An SWIM-type zinc finger spans residues Ile-51 to His-86. The Helicase ATP-binding domain occupies Arg-590–Ser-751. Asp-603 to Thr-610 is an ATP binding site. The short motif at Asp-702 to Gln-705 is the DEAQ box element. A Helicase C-terminal domain is found at Ala-867–Thr-1021.

Belongs to the SNF2/RAD54 helicase family.

This is an uncharacterized protein from Mycoplasma pneumoniae (strain ATCC 29342 / M129 / Subtype 1) (Mycoplasmoides pneumoniae).